Here is a 241-residue protein sequence, read N- to C-terminus: Polycomb group RING finger protein 3 (241 aa).

An RING-type zinc finger spans residues 17-56; it reads CRLCSGYLIDATTVTECLHTFCRSCLVKYLEENNTCPTCR. The tract at residues 115–148 is disordered; it reads AKQHLDPRNGETKADDNSNKETAEEKQEEDNDYH. The span at 117–139 shows a compositional bias: basic and acidic residues; sequence QHLDPRNGETKADDNSNKETAEE. Residues 131–241 form an interaction with BCORL1 region; that stretch reads NSNKETAEEK…LHYRPKMDLL (111 aa).

Component of a PRC1-like complex that contains PCGF3, RNF2 and RYBP. Interacts with RNF2. Interacts with CBX6, CBX7 and CBX8. Interacts with BCORL1.

The protein localises to the nucleus. Its subcellular location is the nucleoplasm. Component of a Polycomb group (PcG) multiprotein PRC1-like complex, a complex class required to maintain the transcriptionally repressive state of many genes, including Hox genes, throughout development. PcG PRC1 complex acts via chromatin remodeling and modification of histones; it mediates monoubiquitination of histone H2A 'Lys-119', rendering chromatin heritably changed in its expressibility. Within the PRC1-like complex, regulates RNF2 ubiquitin ligase activity. Plays a redundant role with PCGF5 as part of a PRC1-like complex that mediates monoubiquitination of histone H2A 'Lys-119' on the X chromosome and is required for normal silencing of one copy of the X chromosome in XX females. This Mus musculus (Mouse) protein is Polycomb group RING finger protein 3 (PcgF3).